A 71-amino-acid polypeptide reads, in one-letter code: Lysis protein (71 aa).

The interval 1 to 24 (MQQPSQPTRESTKKPVPFQHEEYP) is disordered. The chain crosses the membrane as a helical span at residues 34–56 (LYVLICLAIFLSKFTNQLLASLL).

It belongs to the Leviviricetes lysis protein family.

It is found in the host cell inner membrane. It localises to the host cell outer membrane. Its function is as follows. Induces the formation of specific membrane adhesion sites between the inner and outer membranes, apparently leading to host cell lysis. Lysis may be performed via activation of host murein hydrolases. The sequence is that of Lysis protein from Enterobacteria phage fr (Bacteriophage fr).